Consider the following 187-residue polypeptide: Ribosome-recycling factor (187 aa).

It belongs to the RRF family.

It localises to the cytoplasm. Responsible for the release of ribosomes from messenger RNA at the termination of protein biosynthesis. May increase the efficiency of translation by recycling ribosomes from one round of translation to another. The polypeptide is Ribosome-recycling factor (Rhodopseudomonas palustris (strain BisB5)).